Consider the following 412-residue polypeptide: MKNVVALILAGGQGTRLGVLTEKIAKPAVQFGGKYRLIDFTMSNCVNSGIYKIGVLTQYKPHLLNRHIGIGKPWDLDRKDGGVTILQPYSTEKVGVWYKGTADAVYSNIEFVDSYSPDYVVILSGDHIYSMDYNELVDYHVAKSALGTVACMEVPLSEANRFGIMVTDLENRIIEFQEKPKFPKSTLASLGIYVFQWNFIREVLMEDAKDENSTHDFGKDIIPKIINTKRVYAFPFEGYWKDVGTIYSYWESNLELTRPIPPFNIHDENWKIYTHSEEMPPAYISDDARVKNSLISEGCEIYGEVYNSVLAQGVEVGEGVIIKNSVVMSRVRIGNNCFIENAIIAENVVIGNEVKIGVGEFVENKLNSRVYNSEISVIGMDSVIEDKVKIGKNCVVGIDKIVSKSLTSGEYI.

Alpha-D-glucose 1-phosphate-binding positions include Tyr98, Gly163, 178–179 (EK), and Ser189.

It belongs to the bacterial/plant glucose-1-phosphate adenylyltransferase family. In terms of assembly, homotetramer.

It carries out the reaction alpha-D-glucose 1-phosphate + ATP + H(+) = ADP-alpha-D-glucose + diphosphate. The protein operates within glycan biosynthesis; glycogen biosynthesis. In terms of biological role, involved in the biosynthesis of ADP-glucose, a building block required for the elongation reactions to produce glycogen. Catalyzes the reaction between ATP and alpha-D-glucose 1-phosphate (G1P) to produce pyrophosphate and ADP-Glc. In Thermosipho melanesiensis (strain DSM 12029 / CIP 104789 / BI429), this protein is Glucose-1-phosphate adenylyltransferase.